The sequence spans 390 residues: 23S rRNA (uracil(747)-C(5))-methyltransferase RlmC (390 aa).

[4Fe-4S] cluster contacts are provided by C12, C20, C23, and C100. Residues Q225, F254, E275, and N322 each contribute to the S-adenosyl-L-methionine site. The active-site Nucleophile is C349.

It belongs to the class I-like SAM-binding methyltransferase superfamily. RNA M5U methyltransferase family. RlmC subfamily.

The enzyme catalyses uridine(747) in 23S rRNA + S-adenosyl-L-methionine = 5-methyluridine(747) in 23S rRNA + S-adenosyl-L-homocysteine + H(+). Catalyzes the formation of 5-methyl-uridine at position 747 (m5U747) in 23S rRNA. The protein is 23S rRNA (uracil(747)-C(5))-methyltransferase RlmC of Shewanella baltica (strain OS223).